Consider the following 206-residue polypeptide: LexA repressor (206 aa).

The H-T-H motif DNA-binding region spans 28–48 (VREIGEAVGLASSSTVHGHLS). Catalysis depends on for autocatalytic cleavage activity residues Ser-129 and Lys-167.

It belongs to the peptidase S24 family. Homodimer.

The enzyme catalyses Hydrolysis of Ala-|-Gly bond in repressor LexA.. Its function is as follows. Represses a number of genes involved in the response to DNA damage (SOS response), including recA and lexA. In the presence of single-stranded DNA, RecA interacts with LexA causing an autocatalytic cleavage which disrupts the DNA-binding part of LexA, leading to derepression of the SOS regulon and eventually DNA repair. The protein is LexA repressor of Staphylococcus epidermidis (strain ATCC 35984 / DSM 28319 / BCRC 17069 / CCUG 31568 / BM 3577 / RP62A).